Consider the following 230-residue polypeptide: 7-cyano-7-deazaguanine synthase (230 aa).

9–19 contacts ATP; that stretch reads LSGGLDSATTA. Zn(2+) is bound by residues Cys190, Cys198, Cys201, and Cys204.

The protein belongs to the QueC family. Zn(2+) serves as cofactor.

It catalyses the reaction 7-carboxy-7-deazaguanine + NH4(+) + ATP = 7-cyano-7-deazaguanine + ADP + phosphate + H2O + H(+). The protein operates within purine metabolism; 7-cyano-7-deazaguanine biosynthesis. Catalyzes the ATP-dependent conversion of 7-carboxy-7-deazaguanine (CDG) to 7-cyano-7-deazaguanine (preQ(0)). The sequence is that of 7-cyano-7-deazaguanine synthase from Microcystis aeruginosa (strain NIES-843 / IAM M-2473).